The chain runs to 1058 residues: Isoleucine--tRNA ligase (1058 aa).

Residues 48-58 (PYTTGHIHLGT) carry the 'HIGH' region motif. A 'KMSKS' region motif is present at residues 596-600 (KMSKS). Lysine 599 contributes to the ATP binding site.

Belongs to the class-I aminoacyl-tRNA synthetase family. IleS type 2 subfamily. Monomer. Zn(2+) is required as a cofactor.

It is found in the cytoplasm. The enzyme catalyses tRNA(Ile) + L-isoleucine + ATP = L-isoleucyl-tRNA(Ile) + AMP + diphosphate. Functionally, catalyzes the attachment of isoleucine to tRNA(Ile). As IleRS can inadvertently accommodate and process structurally similar amino acids such as valine, to avoid such errors it has two additional distinct tRNA(Ile)-dependent editing activities. One activity is designated as 'pretransfer' editing and involves the hydrolysis of activated Val-AMP. The other activity is designated 'posttransfer' editing and involves deacylation of mischarged Val-tRNA(Ile). This Methanosarcina acetivorans (strain ATCC 35395 / DSM 2834 / JCM 12185 / C2A) protein is Isoleucine--tRNA ligase.